We begin with the raw amino-acid sequence, 495 residues long: Bifunctional protein GlmU (495 aa).

The tract at residues 1–241 (MPQQTAVVVL…AAKVTGVNDR (241 aa)) is pyrophosphorylase. UDP-N-acetyl-alpha-D-glucosamine contacts are provided by residues 10 to 13 (LAAG), K24, Q81, and 86 to 87 (GT). D112 contributes to the Mg(2+) binding site. UDP-N-acetyl-alpha-D-glucosamine contacts are provided by G151, E166, N181, and N239. Residue N239 coordinates Mg(2+). The tract at residues 242-262 (VQLSIATRTMNRYILERHMRA) is linker. The tract at residues 263–495 (GVTIIDPAST…QATEQKDGEQ (233 aa)) is N-acetyltransferase. Residues R344 and K362 each coordinate UDP-N-acetyl-alpha-D-glucosamine. The active-site Proton acceptor is H374. The UDP-N-acetyl-alpha-D-glucosamine site is built by Y377 and N388. Residues A391, 397–398 (NY), S416, and A434 each bind acetyl-CoA. The tract at residues 467 to 495 (GTAAATAAAQALAADEKSSQATEQKDGEQ) is disordered. The segment covering 468 to 479 (TAAATAAAQALA) has biased composition (low complexity). Residues 480–495 (ADEKSSQATEQKDGEQ) show a composition bias toward basic and acidic residues.

In the N-terminal section; belongs to the N-acetylglucosamine-1-phosphate uridyltransferase family. It in the C-terminal section; belongs to the transferase hexapeptide repeat family. In terms of assembly, homotrimer. Requires Mg(2+) as cofactor.

The protein resides in the cytoplasm. The enzyme catalyses alpha-D-glucosamine 1-phosphate + acetyl-CoA = N-acetyl-alpha-D-glucosamine 1-phosphate + CoA + H(+). It catalyses the reaction N-acetyl-alpha-D-glucosamine 1-phosphate + UTP + H(+) = UDP-N-acetyl-alpha-D-glucosamine + diphosphate. Its pathway is nucleotide-sugar biosynthesis; UDP-N-acetyl-alpha-D-glucosamine biosynthesis; N-acetyl-alpha-D-glucosamine 1-phosphate from alpha-D-glucosamine 6-phosphate (route II): step 2/2. It participates in nucleotide-sugar biosynthesis; UDP-N-acetyl-alpha-D-glucosamine biosynthesis; UDP-N-acetyl-alpha-D-glucosamine from N-acetyl-alpha-D-glucosamine 1-phosphate: step 1/1. The protein operates within bacterial outer membrane biogenesis; LPS lipid A biosynthesis. Catalyzes the last two sequential reactions in the de novo biosynthetic pathway for UDP-N-acetylglucosamine (UDP-GlcNAc). The C-terminal domain catalyzes the transfer of acetyl group from acetyl coenzyme A to glucosamine-1-phosphate (GlcN-1-P) to produce N-acetylglucosamine-1-phosphate (GlcNAc-1-P), which is converted into UDP-GlcNAc by the transfer of uridine 5-monophosphate (from uridine 5-triphosphate), a reaction catalyzed by the N-terminal domain. This chain is Bifunctional protein GlmU, found in Nocardia farcinica (strain IFM 10152).